Here is a 302-residue protein sequence, read N- to C-terminus: Urease accessory protein UreD 2 (302 aa).

Belongs to the UreD family. UreD, UreF and UreG form a complex that acts as a GTP-hydrolysis-dependent molecular chaperone, activating the urease apoprotein by helping to assemble the nickel containing metallocenter of UreC. The UreE protein probably delivers the nickel.

The protein localises to the cytoplasm. Its function is as follows. Required for maturation of urease via the functional incorporation of the urease nickel metallocenter. The sequence is that of Urease accessory protein UreD 2 from Brucella canis (strain ATCC 23365 / NCTC 10854 / RM-666).